Reading from the N-terminus, the 658-residue chain is tRNA 5-methylaminomethyl-2-thiouridine biosynthesis bifunctional protein MnmC (658 aa).

Residues Met1 to Leu236 form a tRNA (mnm(5)s(2)U34)-methyltransferase region. Residues Ile265–Ala658 form an FAD-dependent cmnm(5)s(2)U34 oxidoreductase region.

In the N-terminal section; belongs to the methyltransferase superfamily. tRNA (mnm(5)s(2)U34)-methyltransferase family. It in the C-terminal section; belongs to the DAO family. The cofactor is FAD.

The protein localises to the cytoplasm. The catalysed reaction is 5-aminomethyl-2-thiouridine(34) in tRNA + S-adenosyl-L-methionine = 5-methylaminomethyl-2-thiouridine(34) in tRNA + S-adenosyl-L-homocysteine + H(+). Catalyzes the last two steps in the biosynthesis of 5-methylaminomethyl-2-thiouridine (mnm(5)s(2)U) at the wobble position (U34) in tRNA. Catalyzes the FAD-dependent demodification of cmnm(5)s(2)U34 to nm(5)s(2)U34, followed by the transfer of a methyl group from S-adenosyl-L-methionine to nm(5)s(2)U34, to form mnm(5)s(2)U34. The chain is tRNA 5-methylaminomethyl-2-thiouridine biosynthesis bifunctional protein MnmC from Pseudomonas fluorescens (strain ATCC BAA-477 / NRRL B-23932 / Pf-5).